The chain runs to 453 residues: Tubulin beta-1 chain (453 aa).

Positions 12, 71, 140, 144, 145, 146, 206, and 228 each coordinate GTP. Glu71 provides a ligand contact to Mg(2+). The disordered stretch occupies residues 431-453 (TADGVEGYEEEGYENDHPEDDEE). Residues 436-453 (EGYEEEGYENDHPEDDEE) show a composition bias toward acidic residues.

Belongs to the tubulin family. Dimer of alpha and beta chains. A typical microtubule is a hollow water-filled tube with an outer diameter of 25 nm and an inner diameter of 15 nM. Alpha-beta heterodimers associate head-to-tail to form protofilaments running lengthwise along the microtubule wall with the beta-tubulin subunit facing the microtubule plus end conferring a structural polarity. Microtubules usually have 13 protofilaments but different protofilament numbers can be found in some organisms and specialized cells. Mg(2+) is required as a cofactor.

The protein localises to the cytoplasm. It localises to the cytoskeleton. Functionally, tubulin is the major constituent of microtubules, a cylinder consisting of laterally associated linear protofilaments composed of alpha- and beta-tubulin heterodimers. Microtubules grow by the addition of GTP-tubulin dimers to the microtubule end, where a stabilizing cap forms. Below the cap, tubulin dimers are in GDP-bound state, owing to GTPase activity of alpha-tubulin. The sequence is that of Tubulin beta-1 chain (TUBB) from Chondrus crispus (Carrageen Irish moss).